Consider the following 632-residue polypeptide: Tetratricopeptide repeat protein 39B (632 aa).

3 TPR repeats span residues 343–376 (SLVL…QEEW), 535–568 (CLVK…EKLL), and 576–609 (PFTL…YKDY).

Belongs to the TTC39 family.

In terms of biological role, regulates high density lipoprotein (HDL) cholesterol metabolism by promoting the ubiquitination and degradation of the oxysterols receptors LXR (NR1H2 and NR1H3). The polypeptide is Tetratricopeptide repeat protein 39B (TTC39B) (Macaca fascicularis (Crab-eating macaque)).